Here is a 266-residue protein sequence, read N- to C-terminus: Undecaprenyl-diphosphatase (266 aa).

Helical transmembrane passes span 39-59 (PGSS…VWYF), 86-106 (SIFI…LFVP), 112-132 (VLRS…FMYL), 153-173 (LIGF…GITI), 189-209 (FSFL…FIFS), 216-236 (IGFL…LLAI), and 246-266 (NGLK…LLNL).

Belongs to the UppP family.

The protein resides in the cell inner membrane. It carries out the reaction di-trans,octa-cis-undecaprenyl diphosphate + H2O = di-trans,octa-cis-undecaprenyl phosphate + phosphate + H(+). Its function is as follows. Catalyzes the dephosphorylation of undecaprenyl diphosphate (UPP). Confers resistance to bacitracin. The polypeptide is Undecaprenyl-diphosphatase (Prochlorococcus marinus (strain MIT 9215)).